The following is a 303-amino-acid chain: Putative S-adenosyl-L-methionine-dependent methyltransferase Mb1931c (303 aa).

S-adenosyl-L-methionine is bound by residues D129 and D158–L159.

Belongs to the UPF0677 family.

Functionally, exhibits S-adenosyl-L-methionine-dependent methyltransferase activity. This Mycobacterium bovis (strain ATCC BAA-935 / AF2122/97) protein is Putative S-adenosyl-L-methionine-dependent methyltransferase Mb1931c.